The sequence spans 205 residues: Holliday junction branch migration complex subunit RuvA (205 aa).

Positions methionine 1–arginine 64 are domain I. Residues threonine 65–valine 143 form a domain II region. Positions glutamine 144–alanine 154 are flexible linker. The domain III stretch occupies residues alanine 154 to lysine 205.

The protein belongs to the RuvA family. In terms of assembly, homotetramer. Forms an RuvA(8)-RuvB(12)-Holliday junction (HJ) complex. HJ DNA is sandwiched between 2 RuvA tetramers; dsDNA enters through RuvA and exits via RuvB. An RuvB hexamer assembles on each DNA strand where it exits the tetramer. Each RuvB hexamer is contacted by two RuvA subunits (via domain III) on 2 adjacent RuvB subunits; this complex drives branch migration. In the full resolvosome a probable DNA-RuvA(4)-RuvB(12)-RuvC(2) complex forms which resolves the HJ.

It is found in the cytoplasm. Functionally, the RuvA-RuvB-RuvC complex processes Holliday junction (HJ) DNA during genetic recombination and DNA repair, while the RuvA-RuvB complex plays an important role in the rescue of blocked DNA replication forks via replication fork reversal (RFR). RuvA specifically binds to HJ cruciform DNA, conferring on it an open structure. The RuvB hexamer acts as an ATP-dependent pump, pulling dsDNA into and through the RuvAB complex. HJ branch migration allows RuvC to scan DNA until it finds its consensus sequence, where it cleaves and resolves the cruciform DNA. In Rhodopseudomonas palustris (strain BisB5), this protein is Holliday junction branch migration complex subunit RuvA.